A 1146-amino-acid chain; its full sequence is MNEKRLLFKDRHFTCSKIIGRRFACFAQRLSHRRKQSQCDLLNESTGQLPTTCSSAASNSINWNCRVKMTQQMQNLHLCQSKKHSAPSSPNAAKRLYRNLSEKLKGSHSSFDEAYFRTRTDRLSLRKTSVNFQGNEAMFEAVEQQDMDAVQILLYQYTPEELDLNTPNSEGLTPLDIAIMTNNVPIARILLRTGARESPHFVSLESRAMHLNTLVQEAQERVSELSAQVENEGFTLDNTEKEKQLKAWEWRYRLYRRMKTGFEHARAPEMPTNVCLMVTSSTSLTVSFQEPLSVNAAVVTRYKVEWSMSEDFSPLAGEIIMDNLQTLRCTITGLTMGQQYFVQVSAYNMKGWGPAQTTTPACASPSNWKDYDDREPRHKGQSEVLEGLLQQVRALHQHYSCRESTKLQTTGRKQSVSRSLKHLFHSSNKFVKTLKRGLYIAVIFYYKDNILVTNEDQVPIVEIDDSHTSSITQDFLWFTKLSCMWEDIRWLRQSIPISSSSSTVLQTRQKMLAATAQLQNLLGTHNLGRVYYEPIKDRHGNILIVTIREVEMLYSFFNGKWMQISKLQSQRKSLSTPEEPTALDILLITIQDILSYHKRSHQRLFPGLYLGYLKLCSSVDQIKVLVTQKLPNILCHVKIRENNNISREEWEWIQKLSGSESMESVDHTSDCPMQLFFYELQMAVKALLQQINIPLHQARNFRLYTQEVLEMGHNVSFLLLLPASDDVCTAPGQNNPYTPHSGFLNLPLQMFELVHFCSYREKFISLYCRLSAVVELDSLNTQQSLREAISDSEVAAAKQRHQQVLDFIQQIDEVWREMRWIMDALQYARYKQPVSGLPITKLIDPSDEQSLKKINSTSSSHIDCLPSPPPSPEMHRRKTVSDSQPCSDEEACSEVFLPTNSDYDSSDALSPRDLDLVYLSSHDIAQQTLSGLSGSAPDVLQVHDVKTPLGPGQDPQGEGPNPDHSCAEFLHSLTLTGFTPKNHAKTVSGGRPPLGFLGKRKPGKHPHYGGFSRHHRWLRIHSETQSLSLSEGIYTQHLSQACGLAQEPKEAKRAGPALDDPRGLTLAHAASLPEERNSSLQDARPSVRRLYVEPYAAAVVAQDEKPWASLSPPSGGRITLPSPTGPDVSQEGPTASPMSEILSSML.

ANK repeat units follow at residues 133–162 and 170–199; these read QGNE…PEEL and EGLT…RESP. Positions 270-366 constitute a Fibronectin type-III domain; the sequence is MPTNVCLMVT…TTTPACASPS (97 aa). The interval 607–614 is highly conserved peptide sequence; it reads GLYLGYLK. 3 disordered regions span residues 855–887, 945–964, and 1106–1146; these read NSTS…QPCS, VKTP…NPDH, and PWAS…SSML. Polar residues predominate over residues 1131-1146; the sequence is EGPTASPMSEILSSML.

In terms of biological role, may play a role in neuronal function. In Homo sapiens (Human), this protein is Ankyrin repeat and fibronectin type-III domain-containing protein 1.